The sequence spans 266 residues: Ribosomal RNA small subunit methyltransferase A (266 aa).

6 residues coordinate S-adenosyl-L-methionine: Asn-11, Leu-13, Gly-37, Glu-57, Asp-85, and Asn-104.

It belongs to the class I-like SAM-binding methyltransferase superfamily. rRNA adenine N(6)-methyltransferase family. RsmA subfamily.

The protein resides in the cytoplasm. The enzyme catalyses adenosine(1518)/adenosine(1519) in 16S rRNA + 4 S-adenosyl-L-methionine = N(6)-dimethyladenosine(1518)/N(6)-dimethyladenosine(1519) in 16S rRNA + 4 S-adenosyl-L-homocysteine + 4 H(+). Functionally, specifically dimethylates two adjacent adenosines (A1518 and A1519) in the loop of a conserved hairpin near the 3'-end of 16S rRNA in the 30S particle. May play a critical role in biogenesis of 30S subunits. The chain is Ribosomal RNA small subunit methyltransferase A from Campylobacter jejuni (strain RM1221).